We begin with the raw amino-acid sequence, 403 residues long: S-adenosylmethionine synthase (403 aa).

Position 17 (His17) interacts with ATP. Asp19 provides a ligand contact to Mg(2+). K(+) is bound at residue Glu45. 2 residues coordinate L-methionine: Glu58 and Gln104. The tract at residues 104-114 (QSPDIAQGVDT) is flexible loop. ATP contacts are provided by residues 179-181 (DGK), 250-251 (KF), Asp259, 265-266 (RK), Ala282, and Lys286. Position 259 (Asp259) interacts with L-methionine. Lys290 lines the L-methionine pocket.

This sequence belongs to the AdoMet synthase family. Homotetramer; dimer of dimers. It depends on Mg(2+) as a cofactor. The cofactor is K(+).

It localises to the cytoplasm. It carries out the reaction L-methionine + ATP + H2O = S-adenosyl-L-methionine + phosphate + diphosphate. Its pathway is amino-acid biosynthesis; S-adenosyl-L-methionine biosynthesis; S-adenosyl-L-methionine from L-methionine: step 1/1. In terms of biological role, catalyzes the formation of S-adenosylmethionine (AdoMet) from methionine and ATP. The overall synthetic reaction is composed of two sequential steps, AdoMet formation and the subsequent tripolyphosphate hydrolysis which occurs prior to release of AdoMet from the enzyme. This chain is S-adenosylmethionine synthase, found in Mycobacterium marinum (strain ATCC BAA-535 / M).